The following is a 299-amino-acid chain: MSQVQSGILPEHCRAAIWIEANVKGEVDALRAASKTFADKLATFEAKFPDAHLGAVVAFGNNTWRALSGGVGAEELKDFPGYGKGLAPTTQFDVLIHILSLRHDVNFSVAQAAMEAFGDCIEVKEEIHGFRWVEERDLSGFVDGTENPAGEETRREVAVIKDGVDAGGSYVFVQRWEHNLKQLNRMSVHDQEMVIGRTKEANEEIDGDERPETSHLTRVDLKEDGKGLKIVRQSLPYGTASGTHGLYFCAYCARLHNIEQQLLSMFGDTDGKRDAMLRFTKPVTGGYYFAPSLDKLMAL.

The Proton acceptor role is filled by aspartate 143. Histidine 215 is a heme binding site.

Belongs to the DyP-type peroxidase family. Heme b serves as cofactor.

Its subcellular location is the cytoplasm. Has both general peroxidase activity and dye-decolorizing activity. Can catalyze the oxidation of both protoporphyrinogen IX and coproporphyrinogen III to their corresponding porphyrins. Also efficiently decolorizes the dyes alizarin red and Cibacron blue F3GA. In Escherichia coli (strain K12), this protein is Dye-decolorizing peroxidase YfeX (yfeX).